A 629-amino-acid chain; its full sequence is Neuronal acetylcholine receptor subunit alpha-4 (629 aa).

An N-terminal signal peptide occupies residues 1 to 30; the sequence is MEIGGSGAPPPLLLLPLLLLLGTGLLPASS. The Extracellular segment spans residues 32–249; that stretch reads IETRAHAEER…IIRRLPLFYT (218 aa). Residue N59 is glycosylated (N-linked (GlcNAc...) asparagine). Ca(2+)-binding residues include V78 and E80. Residues N109 and N176 are each glycosylated (N-linked (GlcNAc...) asparagine). Cystine bridges form between C163/C177 and C227/C228. Residues 250–270 form a helical membrane-spanning segment; that stretch reads INLIIPCLLISCLTVLVFYLP. Residue C273 is the site of S-palmitoyl cysteine attachment. Transmembrane regions (helical) follow at residues 279-299 and 312-332; these read LCISVLLSLTVFLLLITEIIP and LLFTMIFVTLSIVITVFVLNV. Over 333-603 the chain is Cytoplasmic; the sequence is HHRSPRTHTM…KYVAMVIDRI (271 aa). Disordered stretches follow at residues 420–459 and 503–529; these read ETQPTCRSPSHKVPDLKTSEVEKASPCPSPGSCHPPNSSG and SLTESKPTGSPASLKTRPSQLPVSDQT. S427 is subject to Phosphoserine. Positions 431–442 are enriched in basic and acidic residues; the sequence is KVPDLKTSEVEK. A compositionally biased stretch (low complexity) spans 449–459; sequence PGSCHPPNSSG. The segment covering 504–529 has biased composition (polar residues); it reads LTESKPTGSPASLKTRPSQLPVSDQT. A phosphoserine mark is found at S540 and S543. A helical transmembrane segment spans residues 604–624; it reads FLWMFIIVCLLGTVGLFLPPW.

It belongs to the ligand-gated ion channel (TC 1.A.9) family. Acetylcholine receptor (TC 1.A.9.1) subfamily. Alpha-4/CHRNA4 sub-subfamily. As to quaternary structure, neuronal AChR is composed of two different types of subunits: alpha and beta. CHRNA4 forms heteropentameric neuronal acetylcholine receptors with CHRNB2 and CHRNB4, as well as CHRNA5 and CHRNB3 as accesory subunits. Found in two major stoichiometric forms, LS (low agonist sensitivity): (CHRNA4)3:(CHRNB2)2 and HS (high agonist sensitivity): (CHRNA4)2:(CHRNB2)3, the two stoichiometric forms differ in their unitary conductance, calcium permeability, ACh sensitivity and potentiation by divalent cation. Cells produce predominantly an (CHRNA4)3:(CHRNB2)2 nAChR. The (CHRNA4)2:(CHRNB2)3 expression is selectively up-regulated by nicotine and has lower single channel conductance and calcium permeability. In the striatum, also forms CHRNA4:CHRNA6:CHRNB2 complexes. Also found in the stoichiometric form: (CHRNA4:CHRNB2)2:CHRNB3. Interacts with RIC3; which is required for proper folding and assembly. Interacts with LYPD6.

It localises to the synaptic cell membrane. It is found in the cell membrane. It catalyses the reaction K(+)(in) = K(+)(out). It carries out the reaction Na(+)(in) = Na(+)(out). The catalysed reaction is Ca(2+)(in) = Ca(2+)(out). Activated by a myriad of ligands such as acetylcholine, cytisine, nicotine, choline and epibatidine. Channel potentiation by calcium is stoichiometry-selective, CHRNA4:CHRNB2 nACh receptor is achieved by calcium association with topographically distinct sites framed by anionic residues within the CHRNA4 subunit and between the CHRNA4 and CHRNB2 subunits. nAChR activity is inhibited by the antagonist alpha-conotoxins BuIA, PnIA, GID and MII, small disulfide-constrained peptides from cone snails. Component of neuronal acetylcholine receptors (nAChRs) that function as pentameric, ligand-gated cation channels with high calcium permeability among other activities. nAChRs are excitatory neurotrasnmitter receptors formed by a collection of nAChR subunits known to mediate synaptic transmission in the nervous system and the neuromuscular junction. Each nAchR subunit confers differential attributes to channel properties, including activation, deactivation and desensitization kinetics, pH sensitivity, cation permeability, and binding to allosteric modulators. CHRNA4 forms heteropentameric neuronal acetylcholine receptors with CHRNB2 and CHRNB4, as well as CHRNA5 and CHRNB3 as accesory subunits. Is the most abundant nAChR subtype expressed in the central nervous system. Found in two major stoichiometric forms,(CHRNA4)3:(CHRNB2)2 and (CHRNA4)2:(CHRNB2)3, the two stoichiometric forms differ in their unitary conductance, calcium permeability, ACh sensitivity and potentiation by divalent cation. Involved in the modulation of calcium-dependent signaling pathways, influences the release of neurotransmitters, including dopamine, glutamate and GABA. The protein is Neuronal acetylcholine receptor subunit alpha-4 (Chrna4) of Mus musculus (Mouse).